The primary structure comprises 292 residues: Diaminopimelate epimerase (292 aa).

Substrate is bound by residues Asn-13, Gln-46, and Asn-66. Cys-75 acts as the Proton donor in catalysis. Substrate contacts are provided by residues Gly-76–Asn-77, Asn-166, Asn-199, and Glu-217–Arg-218. Cys-226 acts as the Proton acceptor in catalysis. Gly-227–Thr-228 lines the substrate pocket.

The protein belongs to the diaminopimelate epimerase family. In terms of assembly, homodimer.

It is found in the cytoplasm. The enzyme catalyses (2S,6S)-2,6-diaminopimelate = meso-2,6-diaminopimelate. Its pathway is amino-acid biosynthesis; L-lysine biosynthesis via DAP pathway; DL-2,6-diaminopimelate from LL-2,6-diaminopimelate: step 1/1. Functionally, catalyzes the stereoinversion of LL-2,6-diaminopimelate (L,L-DAP) to meso-diaminopimelate (meso-DAP), a precursor of L-lysine and an essential component of the bacterial peptidoglycan. In Ralstonia pickettii (strain 12J), this protein is Diaminopimelate epimerase.